Reading from the N-terminus, the 706-residue chain is Protein MAM3 (706 aa).

Topologically, residues 1–16 (MSFLPLRSRSRSGAPH) are vacuolar. The chain crosses the membrane as a helical span at residues 17-37 (WVYIILYHIFTIPKIYSLPLL). At 38–65 (SGSHVLNSRDVADSGHSVGDEASVTTYY) the chain is on the cytoplasmic side. Residues 57-240 (DEASVTTYYI…MGVERLTKDE (184 aa)) form the CNNM transmembrane domain. A helical membrane pass occupies residues 66–86 (IISIILVLLGGVFAGLTLGLM). The Vacuolar segment spans residues 87–120 (GQDEVYLKVISTSGSNSEKKLAKRVLDLISRGKH). A helical membrane pass occupies residues 121–141 (WVLVTLLLSNVITNETLPIVL). Residues 142–145 (DRCL) are Cytoplasmic-facing. Residues 146–166 (GGGWQAVVSSTILIVIFGEII) form a helical membrane-spanning segment. Residues 167–177 (PQSVCVKYGLQ) are Vacuolar-facing. Residues 178–198 (VGAFFCPFVLVLMYLMYPVAY) traverse the membrane as a helical segment. The Cytoplasmic portion of the chain corresponds to 199 to 706 (PIATLLDYML…ANGSSSTIKR (508 aa)). CBS domains are found at residues 259–320 (MTPI…DCLP) and 321–386 (ISHF…IVDE). Disordered regions lie at residues 421-495 (SHKE…ASNP), 515-540 (ITTH…LSAE), and 557-597 (LHTQ…ENQN). The span at 433 to 445 (ESSPLLSPSNSNH) shows a compositional bias: low complexity. S439 and S447 each carry phosphoserine. A compositionally biased stretch (polar residues) spans 472–495 (AVLSPTPQVTEHGTIIPSNLASNP). S527 carries the post-translational modification Phosphoserine. Low complexity predominate over residues 566–575 (TQVTTSTKTT). Polar residues predominate over residues 576-597 (RNSPDSISIPNSGANHGNENQN). The residue at position 603 (S603) is a Phosphoserine. Phosphotyrosine is present on Y604. At T607 the chain carries Phosphothreonine. Residue S614 is modified to Phosphoserine. Residues 626 to 706 (IGPAKDWDES…ANGSSSTIKR (81 aa)) form a disordered region. The span at 630–639 (KDWDESKSEY) shows a compositional bias: basic and acidic residues. Over residues 658-680 (SSSNASLFSSIKNKFKNENANNN) the composition is skewed to low complexity. Positions 681 to 706 (DRSNFTDSLSRTSNYDANGSSSTIKR) are enriched in polar residues.

This sequence belongs to the ACDP family.

Its subcellular location is the vacuole membrane. Its function is as follows. Involved in metal homeostasis and more specially in manganese sensitivity. In Saccharomyces cerevisiae (strain ATCC 204508 / S288c) (Baker's yeast), this protein is Protein MAM3 (MAM3).